The chain runs to 59 residues: MANPKRKQSKRRSANRRAANAFIAPEFAKDPTDGSAFRPHRVNPKNGMYRGRQVLNVEV.

Residues 1–15 (MANPKRKQSKRRSAN) are compositionally biased toward basic residues. A disordered region spans residues 1 to 48 (MANPKRKQSKRRSANRRAANAFIAPEFAKDPTDGSAFRPHRVNPKNGM).

This sequence belongs to the bacterial ribosomal protein bL32 family.

This Opitutus terrae (strain DSM 11246 / JCM 15787 / PB90-1) protein is Large ribosomal subunit protein bL32.